A 362-amino-acid chain; its full sequence is Hepatic sodium/bile acid cotransporter (362 aa).

At 1–22 (MEVHNVSAPFNFSLPPGFGHRA) the chain is on the extracellular side. N5 and N11 each carry an N-linked (GlcNAc...) asparagine glycan. The helical transmembrane segment at 23 to 44 (TDKALSIILVLMLLLIMLSLGC) threads the bilayer. Residues 45–47 (TME) are Cytoplasmic-facing. The chain crosses the membrane as a helical span at residues 48–83 (FSKIKAHLWKPKGVIVALVAQFGIMPLAAFLLGKIF). At 84–86 (HLS) the chain is on the extracellular side. A discontinuously helical transmembrane segment spans residues 87–112 (NIEALAILICGCSPGGNLSNLFTLAM). The Cytoplasmic portion of the chain corresponds to 113–115 (KGD). Residues 116–142 (MNLSIVMTTCSSFSALGMMPLLLYVYS) form a helical membrane-spanning segment. Residues 143–156 (KGIYDGDLKDKVPY) lie on the Extracellular side of the membrane. A helical transmembrane segment spans residues 157-179 (KGIMISLVIVLIPCTIGIVLKSK). The Cytoplasmic portion of the chain corresponds to 180-183 (RPHY). A helical membrane pass occupies residues 184 to 217 (VPYILKGGMIITFLLSVAVTALSVINVGNSIMFV). At 218-219 (MT) the chain is on the extracellular side. A helical membrane pass occupies residues 220–243 (PHLLATSSLMPFSGFLMGYILSAL). Residues 244–247 (FQLN) are Cytoplasmic-facing. A discontinuously helical membrane pass occupies residues 248–273 (PSCRRTISMETGFQNIQLCSTILNVT). Residues 274 to 280 (FPPEVIG) are Extracellular-facing. Residues 281–311 (PLFFFPLLYMIFQLAEGLLIIIIFRCYEKIK) traverse the membrane as a helical segment. The Cytoplasmic segment spans residues 312 to 362 (PPKDQTKITYKAAATEDATPAALEKGTHNGNIPPLQPGPSPNGLNSGQMAN). The residue at position 330 (T330) is a Phosphothreonine. The tract at residues 333 to 362 (ALEKGTHNGNIPPLQPGPSPNGLNSGQMAN) is disordered. Over residues 353–362 (NGLNSGQMAN) the composition is skewed to polar residues.

This sequence belongs to the bile acid:sodium symporter (BASS) (TC 2.A.28) family. In terms of tissue distribution, highly expressed in liver and low expression in kidney.

Its subcellular location is the cell membrane. It carries out the reaction taurocholate(out) + 2 Na(+)(out) = taurocholate(in) + 2 Na(+)(in). It catalyses the reaction taurochenodeoxycholate(out) + 2 Na(+)(out) = taurochenodeoxycholate(in) + 2 Na(+)(in). The enzyme catalyses tauroursodeoxycholate(out) + 2 Na(+)(out) = tauroursodeoxycholate(in) + 2 Na(+)(in). The catalysed reaction is glycocholate(out) + 2 Na(+)(out) = glycocholate(in) + 2 Na(+)(in). It carries out the reaction estrone 3-sulfate(out) + 2 Na(+)(out) = estrone 3-sulfate(in) + 2 Na(+)(in). It catalyses the reaction cholate(out) + 2 Na(+)(out) = cholate(in) + 2 Na(+)(in). The enzyme catalyses tauronorcholate(out) + 2 Na(+)(out) = tauronorcholate(in) + 2 Na(+)(in). The catalysed reaction is taurodeoxycholate(out) + 2 Na(+)(out) = taurodeoxycholate(in) + 2 Na(+)(in). It carries out the reaction tauroallocholate(out) + 2 Na(+)(out) = tauroallocholate(in) + 2 Na(+)(in). It catalyses the reaction taurohyodeoxycholate(out) + 2 Na(+)(out) = taurohyodeoxycholate(in) + 2 Na(+)(in). The enzyme catalyses taurohyocholate(out) + 2 Na(+)(out) = taurohyocholate(in) + 2 Na(+)(in). The catalysed reaction is tauro-beta-muricholate(out) + 2 Na(+)(out) = tauro-beta-muricholate(in) + 2 Na(+)(in). With respect to regulation, the transport of bile acids is sodium-dependent. In terms of biological role, as a major transporter of conjugated bile salts from plasma into the hepatocyte, it plays a key role in the enterohepatic circulation of bile salts necessary for the solubilization and absorption of dietary fat and fat-soluble vitamins. It is strictly dependent on the extracellular presence of sodium. It exhibits broad substrate specificity and transports various bile acids, such as taurocholate, cholate, as well as non-bile acid organic compounds, such as estrone sulfate. Works collaboratively with the ileal transporter (NTCP2), the organic solute transporter (OST), and the bile salt export pump (BSEP), to ensure efficacious biological recycling of bile acids during enterohepatic circulation. The chain is Hepatic sodium/bile acid cotransporter (Slc10a1) from Rattus norvegicus (Rat).